Consider the following 234-residue polypeptide: LexA repressor (234 aa).

Positions 41–61 (RAEIANELGFKSANAAEEHLQ) form a DNA-binding region, H-T-H motif. Catalysis depends on for autocatalytic cleavage activity residues Ser-152 and Lys-189.

This sequence belongs to the peptidase S24 family. In terms of assembly, homodimer.

The enzyme catalyses Hydrolysis of Ala-|-Gly bond in repressor LexA.. Functionally, represses a number of genes involved in the response to DNA damage (SOS response), including recA and lexA. In the presence of single-stranded DNA, RecA interacts with LexA causing an autocatalytic cleavage which disrupts the DNA-binding part of LexA, leading to derepression of the SOS regulon and eventually DNA repair. The chain is LexA repressor from Polaromonas sp. (strain JS666 / ATCC BAA-500).